The primary structure comprises 252 residues: Triosephosphate isomerase (252 aa).

10–12 serves as a coordination point for substrate; sequence NWK. Catalysis depends on His-96, which acts as the Electrophile. The active-site Proton acceptor is the Glu-168. Substrate is bound by residues Gly-174, Ser-214, and 235–236; that span reads GG.

The protein belongs to the triosephosphate isomerase family. In terms of assembly, homodimer.

The protein localises to the cytoplasm. It catalyses the reaction D-glyceraldehyde 3-phosphate = dihydroxyacetone phosphate. It functions in the pathway carbohydrate biosynthesis; gluconeogenesis. Its pathway is carbohydrate degradation; glycolysis; D-glyceraldehyde 3-phosphate from glycerone phosphate: step 1/1. Its function is as follows. Involved in the gluconeogenesis. Catalyzes stereospecifically the conversion of dihydroxyacetone phosphate (DHAP) to D-glyceraldehyde-3-phosphate (G3P). The sequence is that of Triosephosphate isomerase from Streptococcus pyogenes serotype M2 (strain MGAS10270).